Here is a 423-residue protein sequence, read N- to C-terminus: Core protease OPG083 (423 aa).

Active-site residues include H241, D248, and C328.

The protein belongs to the peptidase C57 family.

It localises to the virion. Late protein responsible for processing most or all of the viral core and membrane proteins known to undergo morphogenesis-associated proteolysis. These proteolytic events are involved in the transformation of immature virions (IV) into mature virions (MV). Probably cleaves at least the OPG129/A3, OPG136/A10, OPG098/L4, and OPG144/A17 precursors preferentially at Ala-Gly-|-Ala motifs. Also seems to process Ala-Gly-|-Ser and Ala-Gly-|-Thr motifs. This chain is Core protease OPG083 (OPG083), found in Bos taurus (Bovine).